The sequence spans 468 residues: Inositol polyphosphate 5-phosphatase K (468 aa).

The catalytic stretch occupies residues 34–337 (VHVVTWNVAS…SDHKPVTGTF (304 aa)). The required for interaction with GPR78 and PAK1 stretch occupies residues 318–448 (NYVSHMAYSI…HSVVGISQPF (131 aa)). A required for ruffle localization region spans residues 340 to 468 (ELNPLMSVPL…DTLYEPEPQI (129 aa)).

This sequence belongs to the inositol 1,4,5-trisphosphate 5-phosphatase type II family. In terms of assembly, interacts with GPR78; necessary for INPP5K localization at the endoplasmic reticulum. Interacts with PAK1; competes with GPR78. In terms of tissue distribution, expressed in the skeletal muscle and the eye.

Its subcellular location is the endoplasmic reticulum. It localises to the cytoplasm. It catalyses the reaction 1D-myo-inositol 1,4,5-trisphosphate + H2O = 1D-myo-inositol 1,4-bisphosphate + phosphate. The enzyme catalyses 1,2-dioctanoyl-sn-glycero-3-phospho-(1D-myo-inositol-3,4,5-trisphosphate) + H2O = 1,2-dioctanoyl-sn-glycero-3-phospho-(1D-myo-inositol-3,4-bisphosphate) + phosphate. It carries out the reaction 1D-myo-inositol 1,3,4,5-tetrakisphosphate + H2O = 1D-myo-inositol 1,3,4-trisphosphate + phosphate. The catalysed reaction is a 1,2-diacyl-sn-glycero-3-phospho-(1D-myo-inositol-4,5-bisphosphate) + H2O = a 1,2-diacyl-sn-glycero-3-phospho-(1D-myo-inositol 4-phosphate) + phosphate. It catalyses the reaction a 1,2-diacyl-sn-glycero-3-phospho-(1D-myo-inositol-3,4,5-trisphosphate) + H2O = a 1,2-diacyl-sn-glycero-3-phospho-(1D-myo-inositol-3,4-bisphosphate) + phosphate. Its function is as follows. Inositol 5-phosphatase which acts on inositol 1,4,5-trisphosphate, inositol 1,3,4,5-tetrakisphosphate, phosphatidylinositol 4,5-bisphosphate and phosphatidylinositol 3,4,5-trisphosphate. Has 6-fold higher affinity for phosphatidylinositol 4,5-bisphosphate than for inositol 1,4,5-trisphosphate. Negatively regulates assembly of the actin cytoskeleton. Controls insulin-dependent glucose uptake among inositol 3,4,5-trisphosphate phosphatases; therefore, is the specific regulator for insulin signaling in skeletal muscle. This Mus musculus (Mouse) protein is Inositol polyphosphate 5-phosphatase K.